The sequence spans 382 residues: Chaperone protein DnaJ (382 aa).

A J domain is found at 5-70 (DYYELLGVQK…EKRAAYDRYG (66 aa)). The segment at 146-224 (GAEKEISFRK…CHGEGRVRRT (79 aa)) adopts a CR-type zinc-finger fold. 8 residues coordinate Zn(2+): C159, C162, C176, C179, C198, C201, C212, and C215. CXXCXGXG motif repeat units follow at residues 159–166 (CERCDGSG), 176–183 (CPTCRGAG), 198–205 (CPTCGGMG), and 212–219 (CTVCHGEG). The interval 230–250 (RIPPGVDNGSRLRSSGNGEAG) is disordered.

Belongs to the DnaJ family. Homodimer. Requires Zn(2+) as cofactor.

The protein localises to the cytoplasm. Functionally, participates actively in the response to hyperosmotic and heat shock by preventing the aggregation of stress-denatured proteins and by disaggregating proteins, also in an autonomous, DnaK-independent fashion. Unfolded proteins bind initially to DnaJ; upon interaction with the DnaJ-bound protein, DnaK hydrolyzes its bound ATP, resulting in the formation of a stable complex. GrpE releases ADP from DnaK; ATP binding to DnaK triggers the release of the substrate protein, thus completing the reaction cycle. Several rounds of ATP-dependent interactions between DnaJ, DnaK and GrpE are required for fully efficient folding. Also involved, together with DnaK and GrpE, in the DNA replication of plasmids through activation of initiation proteins. The polypeptide is Chaperone protein DnaJ (Opitutus terrae (strain DSM 11246 / JCM 15787 / PB90-1)).